The chain runs to 426 residues: Glutamate-1-semialdehyde 2,1-aminomutase (426 aa).

Lysine 265 bears the N6-(pyridoxal phosphate)lysine mark.

This sequence belongs to the class-III pyridoxal-phosphate-dependent aminotransferase family. HemL subfamily. As to quaternary structure, homodimer. It depends on pyridoxal 5'-phosphate as a cofactor.

Its subcellular location is the cytoplasm. It carries out the reaction (S)-4-amino-5-oxopentanoate = 5-aminolevulinate. The protein operates within porphyrin-containing compound metabolism; protoporphyrin-IX biosynthesis; 5-aminolevulinate from L-glutamyl-tRNA(Glu): step 2/2. The protein is Glutamate-1-semialdehyde 2,1-aminomutase of Escherichia fergusonii (strain ATCC 35469 / DSM 13698 / CCUG 18766 / IAM 14443 / JCM 21226 / LMG 7866 / NBRC 102419 / NCTC 12128 / CDC 0568-73).